Consider the following 70-residue polypeptide: ATP synthase subunit c (70 aa).

2 helical membrane passes run alanine 5–valine 25 and phenylalanine 47–valine 67.

It belongs to the ATPase C chain family. As to quaternary structure, F-type ATPases have 2 components, F(1) - the catalytic core - and F(0) - the membrane proton channel. F(1) has five subunits: alpha(3), beta(3), gamma(1), delta(1), epsilon(1). F(0) has three main subunits: a(1), b(2) and c(10-14). The alpha and beta chains form an alternating ring which encloses part of the gamma chain. F(1) is attached to F(0) by a central stalk formed by the gamma and epsilon chains, while a peripheral stalk is formed by the delta and b chains.

Its subcellular location is the cell membrane. F(1)F(0) ATP synthase produces ATP from ADP in the presence of a proton or sodium gradient. F-type ATPases consist of two structural domains, F(1) containing the extramembraneous catalytic core and F(0) containing the membrane proton channel, linked together by a central stalk and a peripheral stalk. During catalysis, ATP synthesis in the catalytic domain of F(1) is coupled via a rotary mechanism of the central stalk subunits to proton translocation. Functionally, key component of the F(0) channel; it plays a direct role in translocation across the membrane. A homomeric c-ring of between 10-14 subunits forms the central stalk rotor element with the F(1) delta and epsilon subunits. This is ATP synthase subunit c from Anoxybacillus flavithermus (strain DSM 21510 / WK1).